The sequence spans 314 residues: uncharacterized protein (314 aa).

An N-terminal signal peptide occupies residues methionine 1–serine 18. N-linked (GlcNAc...) asparagine glycans are attached at residues asparagine 43, asparagine 96, asparagine 109, asparagine 116, asparagine 117, and asparagine 161. Positions serine 252–phenylalanine 314 are disordered. Low complexity-rich tracts occupy residues lysine 257–asparagine 268 and lysine 285–serine 296.

The protein localises to the secreted. This is an uncharacterized protein from Dictyostelium discoideum (Social amoeba).